The sequence spans 623 residues: Membrane protein insertase YidC (623 aa).

Helical transmembrane passes span 8–28 (LILA…LFPP), 379–399 (MGLA…PLAY), 449–469 (LPIL…FVTI), 507–527 (TTMA…SMWL), and 543–563 (IFAW…SGLV). Over residues 601 to 617 (KPAAQPAGKAANDGAAP) the composition is skewed to low complexity. Positions 601–623 (KPAAQPAGKAANDGAAPAKKRKP) are disordered.

It belongs to the OXA1/ALB3/YidC family. Type 1 subfamily. In terms of assembly, interacts with the Sec translocase complex via SecD. Specifically interacts with transmembrane segments of nascent integral membrane proteins during membrane integration.

The protein localises to the cell inner membrane. Its function is as follows. Required for the insertion and/or proper folding and/or complex formation of integral membrane proteins into the membrane. Involved in integration of membrane proteins that insert both dependently and independently of the Sec translocase complex, as well as at least some lipoproteins. Aids folding of multispanning membrane proteins. The polypeptide is Membrane protein insertase YidC (Cereibacter sphaeroides (strain ATCC 17023 / DSM 158 / JCM 6121 / CCUG 31486 / LMG 2827 / NBRC 12203 / NCIMB 8253 / ATH 2.4.1.) (Rhodobacter sphaeroides)).